We begin with the raw amino-acid sequence, 207 residues long: Peptidyl-tRNA hydrolase (207 aa).

Tyr-14 is a binding site for tRNA. His-19 functions as the Proton acceptor in the catalytic mechanism. Residues Tyr-64, Asn-66, and Asn-112 each contribute to the tRNA site.

Belongs to the PTH family. As to quaternary structure, monomer.

Its subcellular location is the cytoplasm. It carries out the reaction an N-acyl-L-alpha-aminoacyl-tRNA + H2O = an N-acyl-L-amino acid + a tRNA + H(+). Hydrolyzes ribosome-free peptidyl-tRNAs (with 1 or more amino acids incorporated), which drop off the ribosome during protein synthesis, or as a result of ribosome stalling. In terms of biological role, catalyzes the release of premature peptidyl moieties from peptidyl-tRNA molecules trapped in stalled 50S ribosomal subunits, and thus maintains levels of free tRNAs and 50S ribosomes. The protein is Peptidyl-tRNA hydrolase of Rhodopseudomonas palustris (strain BisB5).